Consider the following 443-residue polypeptide: ATP-dependent protease ATPase subunit HslU (443 aa).

ATP is bound by residues isoleucine 18, 60-65 (GVGKTE), aspartate 256, glutamate 321, and arginine 393.

This sequence belongs to the ClpX chaperone family. HslU subfamily. In terms of assembly, a double ring-shaped homohexamer of HslV is capped on each side by a ring-shaped HslU homohexamer. The assembly of the HslU/HslV complex is dependent on binding of ATP.

It is found in the cytoplasm. In terms of biological role, ATPase subunit of a proteasome-like degradation complex; this subunit has chaperone activity. The binding of ATP and its subsequent hydrolysis by HslU are essential for unfolding of protein substrates subsequently hydrolyzed by HslV. HslU recognizes the N-terminal part of its protein substrates and unfolds these before they are guided to HslV for hydrolysis. This chain is ATP-dependent protease ATPase subunit HslU, found in Salmonella typhi.